A 473-amino-acid chain; its full sequence is Membrane-bound acylglycerophosphatidylinositol O-acyltransferase MBOAT7 (473 aa).

Over 1–5 (MTPEE) the chain is Cytoplasmic. The helical transmembrane segment at 6–22 (WTYLMVLLISIPVGFLF) threads the bilayer. Residues 23–33 (KKAGPGLKRWG) lie on the Lumenal side of the membrane. The chain crosses the membrane as a helical span at residues 34–57 (AAAVGLGLTLFTCGPHSLHSLITI). The Cytoplasmic portion of the chain corresponds to 58 to 73 (LGTWALIQAQPCSCHA). A helical transmembrane segment spans residues 74–93 (LALAWTFSYLLFFRALSLLG). Topologically, residues 94–194 (LPTPTPFTNA…VPSLRPLLRR (101 aa)) are lumenal. A helical transmembrane segment spans residues 195 to 212 (AWPAPLFGLLFLLSSHLF). At 213-231 (PLEAVREDAFYARPLPTRL) the chain is on the cytoplasmic side. Residues 232-261 (FYMIPVFFAFRMRFYVAWIAAECGCIAAGF) traverse the membrane as a helical segment. The Lumenal portion of the chain corresponds to 262-426 (GAYPVAAKAR…LSMADTLRYW (165 aa)). An N-linked (GlcNAc...) asparagine glycan is attached at Asn321. A helical transmembrane segment spans residues 427 to 447 (ASIYFWVHFLALACLGLGLVL). Over 448 to 473 (GGGSPSKRKTPSQATSSQAKEKLREE) the chain is Cytoplasmic. Residues 451 to 473 (SPSKRKTPSQATSSQAKEKLREE) form a disordered region.

It belongs to the membrane-bound acyltransferase family. Interacts with SPTSSA; the interaction facilitates MBOAT7 location to mitochondria-associated membranes (MAMs).

The protein resides in the endoplasmic reticulum membrane. It carries out the reaction a 1-acyl-sn-glycero-3-phospho-(1D-myo-inositol) + an acyl-CoA = a 1,2-diacyl-sn-glycero-3-phospho-(1D-myo-inositol) + CoA. The enzyme catalyses 1-octadecanoyl-sn-glycero-3-phospho-(1D-myo-inositol) + (5Z,8Z,11Z,14Z)-eicosatetraenoyl-CoA = 1-octadecanoyl-2-(5Z,8Z,11Z,14Z-eicosatetraenoyl)-sn-glycero-3-phospho-(1D-myo-inositol) + CoA. The catalysed reaction is a 1-acyl-sn-glycero-3-phospho-(1D-myo-inositol) + (5Z,8Z,11Z,14Z)-eicosatetraenoyl-CoA = a 1-acyl-2-(5Z,8Z,11Z,14Z-eicosatetraenoyl)-sn-glycero-3-phospho-(1D-myo-inositol) + CoA. It catalyses the reaction (5Z,8Z,11Z,14Z)-eicosatetraenoyl-CoA + 1-hexadecanoyl-sn-glycero-3-phosphocholine = 1-hexadecanoyl-2-(5Z,8Z,11Z,14Z-eicosatetraenoyl)-sn-glycero-3-phosphocholine + CoA. It participates in lipid metabolism; phospholipid metabolism. In terms of biological role, acyltransferase which catalyzes the transfer of an acyl group from an acyl-CoA to a lysophosphatidylinositol (1-acylglycerophosphatidylinositol or LPI) leading to the production of a phosphatidylinositol (1,2-diacyl-sn-glycero-3-phosphoinositol or PI) and participates in the reacylation step of the phospholipid remodeling pathway also known as the Lands cycle. Prefers arachidonoyl-CoA as the acyl donor, thus contributing to the regulation of free levels arachidonic acid in cell. In liver, participates in the regulation of triglyceride metabolism through the phosphatidylinositol acyl-chain remodeling regulation. The protein is Membrane-bound acylglycerophosphatidylinositol O-acyltransferase MBOAT7 of Mus musculus (Mouse).